Consider the following 457-residue polypeptide: UDP-glycosyltransferase 708C2 (457 aa).

The active-site Proton acceptor is H32. H32 contributes to the an anthocyanidin binding site. Residue D129 is the Charge relay of the active site. UDP-alpha-D-glucose is bound at residue T150. Positions 279–280 (NR) are UDP. 7 residues coordinate UDP-alpha-D-glucose: V341, Q343, H358, W361, N362, S363, and E366. G381 serves as a coordination point for an anthocyanidin. D382 and Q383 together coordinate UDP-alpha-D-glucose.

This sequence belongs to the UDP-glycosyltransferase family. In terms of tissue distribution, expressed in cotyledons. Not detected in flowers, leaves, roots and hypocotyls.

The catalysed reaction is a 3'-hydro-2'-hydroxy-beta-oxodihydrochalcone + UDP-alpha-D-glucose = a 3'-(beta-D-glucopyranosyl)-2'-hydroxy-beta-oxodihydrochalcone + UDP + H(+). Functionally, UDP-glucose-dependent glucosyltransferase catalyzing the c-glucosylation of 2-hydroxyflavanones (2-hydroxynaringenin, 2-hydroxyeriodictyol and 2-hydroxypinocembrin) and phloretin. No activity with flavanones, flavones or flavonols. This chain is UDP-glycosyltransferase 708C2, found in Fagopyrum esculentum (Common buckwheat).